The sequence spans 344 residues: Lipase chaperone (344 aa).

The helical transmembrane segment at 14-34 threads the bilayer; sequence VAVYGAVGLAAIAGVAIWSGA. The segment covering 45–57 has biased composition (low complexity); sequence LSADAAARDGASA. The segment at 45–78 is disordered; sequence LSADAAARDGASAAPPPPARPASAGMPSPLAGSS.

Belongs to the lipase chaperone family.

It localises to the cell inner membrane. May be involved in the folding of the extracellular lipase during its passage through the periplasm. This Burkholderia ambifaria (strain ATCC BAA-244 / DSM 16087 / CCUG 44356 / LMG 19182 / AMMD) (Burkholderia cepacia (strain AMMD)) protein is Lipase chaperone.